Here is a 102-residue protein sequence, read N- to C-terminus: NADH-quinone oxidoreductase subunit K 1 (102 aa).

3 helical membrane-spanning segments follow: residues 5–25 (FEHV…CVLV), 30–50 (LIML…AFVG), and 65–85 (LVIM…VVYL).

The protein belongs to the complex I subunit 4L family. In terms of assembly, NDH-1 is composed of 14 different subunits. Subunits NuoA, H, J, K, L, M, N constitute the membrane sector of the complex.

The protein localises to the cell inner membrane. It catalyses the reaction a quinone + NADH + 5 H(+)(in) = a quinol + NAD(+) + 4 H(+)(out). NDH-1 shuttles electrons from NADH, via FMN and iron-sulfur (Fe-S) centers, to quinones in the respiratory chain. The immediate electron acceptor for the enzyme in this species is believed to be ubiquinone. Couples the redox reaction to proton translocation (for every two electrons transferred, four hydrogen ions are translocated across the cytoplasmic membrane), and thus conserves the redox energy in a proton gradient. This is NADH-quinone oxidoreductase subunit K 1 from Geobacter metallireducens (strain ATCC 53774 / DSM 7210 / GS-15).